The primary structure comprises 417 residues: Imidazolonepropionase (417 aa).

Residues His77 and His79 each contribute to the Fe(3+) site. 2 residues coordinate Zn(2+): His77 and His79. Arg86, Tyr149, and His182 together coordinate 4-imidazolone-5-propanoate. Tyr149 lines the N-formimidoyl-L-glutamate pocket. His247 serves as a coordination point for Fe(3+). Zn(2+) is bound at residue His247. Residue Gln250 coordinates 4-imidazolone-5-propanoate. Fe(3+) is bound at residue Asp322. Asp322 serves as a coordination point for Zn(2+). N-formimidoyl-L-glutamate is bound by residues Asn324 and Gly326. Thr327 is a 4-imidazolone-5-propanoate binding site.

The protein belongs to the metallo-dependent hydrolases superfamily. HutI family. Zn(2+) is required as a cofactor. Fe(3+) serves as cofactor.

The protein localises to the cytoplasm. The catalysed reaction is 4-imidazolone-5-propanoate + H2O = N-formimidoyl-L-glutamate. The protein operates within amino-acid degradation; L-histidine degradation into L-glutamate; N-formimidoyl-L-glutamate from L-histidine: step 3/3. Functionally, catalyzes the hydrolytic cleavage of the carbon-nitrogen bond in imidazolone-5-propanoate to yield N-formimidoyl-L-glutamate. It is the third step in the universal histidine degradation pathway. The chain is Imidazolonepropionase from Cupriavidus taiwanensis (strain DSM 17343 / BCRC 17206 / CCUG 44338 / CIP 107171 / LMG 19424 / R1) (Ralstonia taiwanensis (strain LMG 19424)).